The sequence spans 351 residues: S-adenosylmethionine:tRNA ribosyltransferase-isomerase (351 aa).

This sequence belongs to the QueA family. Monomer.

The protein resides in the cytoplasm. It catalyses the reaction 7-aminomethyl-7-carbaguanosine(34) in tRNA + S-adenosyl-L-methionine = epoxyqueuosine(34) in tRNA + adenine + L-methionine + 2 H(+). Its pathway is tRNA modification; tRNA-queuosine biosynthesis. Its function is as follows. Transfers and isomerizes the ribose moiety from AdoMet to the 7-aminomethyl group of 7-deazaguanine (preQ1-tRNA) to give epoxyqueuosine (oQ-tRNA). In Hahella chejuensis (strain KCTC 2396), this protein is S-adenosylmethionine:tRNA ribosyltransferase-isomerase.